The primary structure comprises 954 residues: Xylanolytic transcriptional activator xlnR (954 aa).

Disordered regions lie at residues 1 to 39 (MSTT…LAEG) and 51 to 93 (REAA…SQRD). Positions 8-21 (HFPHSYSPFSSSRS) are enriched in low complexity. A compositionally biased stretch (polar residues) spans 22–33 (LNRMAQSQTSGL). A compositionally biased stretch (basic and acidic residues) spans 64-78 (GKPKDQFQVDNDNHH). The segment covering 82–91 (SLSNFKNPSQ) has biased composition (polar residues). Positions 119-145 (CDQCNQLRTKCDGQNPCAHCIDFGLTC) form a DNA-binding region, zn(2)-C6 fungal-type. Disordered regions lie at residues 173-226 (ATNS…HSEA), 310-333 (LMNP…TENP), 566-607 (ELPP…PGNT), and 758-777 (MDGS…STVE). Polar residues predominate over residues 174 to 183 (TNSGQPNGSS). Residues 574-590 (ARPDAERDGDPDADLSK) are compositionally biased toward basic and acidic residues. The span at 764–777 (NHVSPSGRSSSTVE) shows a compositional bias: polar residues.

Belongs to the xlnR/xlr1 family.

The protein localises to the nucleus. Transcriptional activator of the xylanolytic system. Involved in the regulation of extracellular cellulolytic and xylanolytic genes and in the regulation of the intracellular activities of D-xylose catabolic genes in the pentose catabolic pathway (PCP) in response to the presence of D-xylose. The sequence is that of Xylanolytic transcriptional activator xlnR (xlnR) from Aspergillus fumigatus (strain ATCC MYA-4609 / CBS 101355 / FGSC A1100 / Af293) (Neosartorya fumigata).